A 586-amino-acid polypeptide reads, in one-letter code: MLQKFISKSNQSLLMRLLAENFKHQAPWYGIAIGSMVVVAVMTSASAWIMRDVVNSTVVSKDIEKVFGVAVTVAIIFAVKGLATYVQSIFLSKAGNNIIAHTQRRLFEHVLRQGLSFYSIYPSSELLVRLTNNAQAVRSVIELVVTSFIRDLFSLMGLLAVMVIQQPLLSLVSAAVGPGAILGVRVLTRKVRKIMELEIASIGQIIQSVQETSTGIRIVKAFALEDFMRRRMDKYIGDVERRANSIARLEAASSPIMETLSGFAIAGVIALSGVLVLQQGNTPGELMSFITALLLAYEPAKRLARMRISLESALVGVRMMYQLADHPIELTEKNSAIPLPEGPGEIRFKDVNFSYKNGERLFQNLNVTFPAGKTTALVGPSGAGKSSIINLIMRLYDPDVGSVTVDGHDLKDVTFRSLRDRIGFVGQDTFLFSGTIKYNISLGREGASDEEIIEAAKTANAHDFIMKMPHGYDTEVGENGIKLSGGQKQRITIARAMLRNAEILIFDEATSALDSESEIQIRQALARLTRKRTTIMIAHRLSTVTAADNIVVMEGGQVAEQGPQGRLLSQDGVYRRLYELQLLPSA.

The ABC transmembrane type-1 domain maps to 29-312; that stretch reads YGIAIGSMVV…LARMRISLES (284 aa). Helical transmembrane passes span 30-50, 66-86, 162-184, and 256-276; these read GIAIGSMVVVAVMTSASAWIM, VFGVAVTVAIIFAVKGLATYV, MVIQQPLLSLVSAAVGPGAILGV, and IMETLSGFAIAGVIALSGVLV. The ABC transporter domain occupies 346–580; it reads IRFKDVNFSY…DGVYRRLYEL (235 aa). 379-386 lines the ATP pocket; that stretch reads GPSGAGKS.

The protein belongs to the ABC transporter superfamily.

The protein localises to the cell membrane. This is an uncharacterized protein from Sinorhizobium fredii (strain NBRC 101917 / NGR234).